A 249-amino-acid polypeptide reads, in one-letter code: MLLLFDVGNTHTTIALTKDGKSFDIKRVSTHSIQTEDELYVFLKMFYRNDFKDIVVSSVVPNINYIFEFFAEKYLNKKAIFVSAKEYNEIIWNVNTPEEIGADRVVDVIAASRDYGKDAIVVDFGTAITIEVLKENRYEGGVIIPGFNMMVNALFKGTAKLPKVELKPSDTFVGKDTGSNIRIGVINTILGGIDYTIERIKSDYDLKSAPIIYTGGQSKLIREYLKKDIIYDLELGLRGIYYFYENIAC.

6–13 is a binding site for ATP; it reads DVGNTHTT. 101–104 is a binding site for substrate; sequence GADR. Asp-103 serves as the catalytic Proton acceptor. Asp-123 lines the K(+) pocket. Thr-126 contributes to the ATP binding site. Position 177 (Thr-177) interacts with substrate.

This sequence belongs to the type III pantothenate kinase family. In terms of assembly, homodimer. NH4(+) is required as a cofactor. It depends on K(+) as a cofactor.

Its subcellular location is the cytoplasm. The enzyme catalyses (R)-pantothenate + ATP = (R)-4'-phosphopantothenate + ADP + H(+). It functions in the pathway cofactor biosynthesis; coenzyme A biosynthesis; CoA from (R)-pantothenate: step 1/5. In terms of biological role, catalyzes the phosphorylation of pantothenate (Pan), the first step in CoA biosynthesis. This Thermosipho africanus (strain TCF52B) protein is Type III pantothenate kinase.